The sequence spans 774 residues: Lysyl oxidase homolog 2 (774 aa).

An N-terminal signal peptide occupies residues 1-25; it reads MERPLCSHLCSCLAMLALLSPLSLA. 4 consecutive SRCR domains span residues 58–159, 188–302, 326–425, and 435–544; these read LRLA…VVCS, IRAI…VSCV, VRLR…VRCN, and LRLN…VACS. 9 disulfide bridges follow: C84–C148, C97–C158, C128–C138, C218–C291, C231–C301, C265–C275, C351–C414, C364–C424, and C395–C405. The N-linked (GlcNAc...) asparagine glycan is linked to N288. N-linked (GlcNAc...) (complex) asparagine glycosylation occurs at N455. 3 disulfide bridges follow: C464-C530, C477-C543, and C511-C521. Positions 548–751 are lysyl-oxidase like; it reads PDLVLNAEMV…WMYNCHIGGS (204 aa). Ca(2+) is bound by residues D549 and L550. Intrachain disulfides connect C573–C625, C579–C695, C657–C673, and C663–C685. Cu cation contacts are provided by H626, H628, and H630. An N-linked (GlcNAc...) (complex) asparagine glycan is attached at N644. The segment at residues 653-689 is a cross-link (lysine tyrosylquinone (Lys-Tyr)); the sequence is KASFCLEDTECEGDIQKNYECANFGDQGITMGCWDMY. At Y689 the chain carries 2',4',5'-topaquinone. 4 residues coordinate Ca(2+): E722, D724, N727, and N728. C732 and C746 are disulfide-bonded.

Belongs to the lysyl oxidase family. Component of some chromatin repressor complex. Interacts with SNAI1. Interacts with TAF10. Interacts with HSPA5. Interacts with EFEMP2. It depends on Cu cation as a cofactor. The cofactor is lysine tyrosylquinone residue. In terms of processing, the lysine tyrosylquinone cross-link (LTQ) is generated by condensation of the epsilon-amino group of a lysine with a topaquinone produced by oxidation of tyrosine. Post-translationally, N-glycosylated. N-glycosylation on Asn-455 and Asn-644 may be essential for proper folding and secretion; may be composed of a fucosylated carbohydrates attached to a trimannose N-linked glycan core. As to expression, expressed in many tissues. Highest expression in reproductive tissues, placenta, uterus and prostate. In esophageal epithelium, expressed in the basal, prickle and granular cell layers. Up-regulated in a number of cancers cells and tissues.

Its subcellular location is the secreted. It localises to the extracellular space. The protein resides in the extracellular matrix. It is found in the basement membrane. The protein localises to the nucleus. Its subcellular location is the chromosome. It localises to the endoplasmic reticulum. It carries out the reaction L-lysyl-[protein] + O2 + H2O = (S)-2-amino-6-oxohexanoyl-[protein] + H2O2 + NH4(+). Its activity is regulated as follows. According to some reports, it is inhibited by beta-aminopropionitrile (BAPN). According to another report, it is not inhibited by beta-aminopropionitrile (BAPN). Specifically inhibited by a mouse monoclonal antibody AB0023, inhibition occurs in a non-competitive manner. Functionally, mediates the post-translational oxidative deamination of lysine residues on target proteins leading to the formation of deaminated lysine (allysine). Acts as a transcription corepressor and specifically mediates deamination of trimethylated 'Lys-4' of histone H3 (H3K4me3), a specific tag for epigenetic transcriptional activation. Shows no activity against histone H3 when it is trimethylated on 'Lys-9' (H3K9me3) or 'Lys-27' (H3K27me3) or when 'Lys-4' is monomethylated (H3K4me1) or dimethylated (H3K4me2). Also mediates deamination of methylated TAF10, a member of the transcription factor IID (TFIID) complex, which induces release of TAF10 from promoters, leading to inhibition of TFIID-dependent transcription. LOXL2-mediated deamination of TAF10 results in transcriptional repression of genes required for embryonic stem cell pluripotency including POU5F1/OCT4, NANOG, KLF4 and SOX2. Involved in epithelial to mesenchymal transition (EMT) via interaction with SNAI1 and participates in repression of E-cadherin CDH1, probably by mediating deamination of histone H3. During EMT, involved with SNAI1 in negatively regulating pericentromeric heterochromatin transcription. SNAI1 recruits LOXL2 to pericentromeric regions to oxidize histone H3 and repress transcription which leads to release of heterochromatin component CBX5/HP1A, enabling chromatin reorganization and acquisition of mesenchymal traits. Interacts with the endoplasmic reticulum protein HSPA5 which activates the IRE1-XBP1 pathway of the unfolded protein response, leading to expression of several transcription factors involved in EMT and subsequent EMT induction. Involved in E-cadherin repression following hypoxia, a hallmark of EMT believed to amplify tumor aggressiveness, suggesting that it may play a role in tumor progression. When secreted into the extracellular matrix, promotes cross-linking of extracellular matrix proteins by mediating oxidative deamination of peptidyl lysine residues in precursors to fibrous collagen and elastin. Acts as a regulator of sprouting angiogenesis, probably via collagen IV scaffolding. Acts as a regulator of chondrocyte differentiation, probably by regulating expression of factors that control chondrocyte differentiation. This Homo sapiens (Human) protein is Lysyl oxidase homolog 2 (LOXL2).